Here is a 470-residue protein sequence, read N- to C-terminus: MALWGGRFSQAADARFKNFNDSLRFDYRLAEQDITGSVAWSKALVSVGILTQDEQLTIEAALNDLKLAVLENPEQILQSDAEDIHSWVETQLIAKVGDLGKKLHTGRSRNDQVATDLKLWCKQQGEQLLMQLDKTQQQLVSLAREHQHTVLPGYTHLQRAQPVTFSHWCLAYVEMLERDFSRLTDCLKRLDTCPLGSGALAGTAYPMDRTELAHTLGFASATLNSLDSVSDRDHVMELMSTASMSMIHLSRLAEDLIFYNSGESNFIELADAVTSGSSLMPQKKNPDALELIRGKTGRVFGSLSAMLMTLKALPLAYNKDMQEDKEGLFDALDTWSDCLEMAAMSLVGMKINEERTKEAALGGYSNATELADYLVAKGVPFRDSHHIVGEAVVAAIAKGVPLEALTLAEFKAFDVLIEDDVYHHLSLDETLAKRKAQGGVSPVQVEFALTNAEKRLEERDTSGISIRAAR.

The argininosuccinate lyase stretch occupies residues Met1–Arg470.

It in the N-terminal section; belongs to the lyase 1 family. Argininosuccinate lyase subfamily. In the C-terminal section; belongs to the acetyltransferase family. ArgA subfamily.

It is found in the cytoplasm. The enzyme catalyses 2-(N(omega)-L-arginino)succinate = fumarate + L-arginine. It carries out the reaction L-glutamate + acetyl-CoA = N-acetyl-L-glutamate + CoA + H(+). It participates in amino-acid biosynthesis; L-arginine biosynthesis; N(2)-acetyl-L-ornithine from L-glutamate: step 1/4. It functions in the pathway amino-acid biosynthesis; L-arginine biosynthesis; L-arginine from L-ornithine and carbamoyl phosphate: step 3/3. The chain is Bifunctional protein ArgHA (argHA) from Moritella profunda.